A 362-amino-acid chain; its full sequence is uncharacterized protein (362 aa).

This is an uncharacterized protein from Caenorhabditis elegans.